The chain runs to 476 residues: Rifampicin monooxygenase (476 aa).

The FAD site is built by Thr-12, Glu-31, Lys-32, Gln-98, Leu-122, and Thr-156. Rifampicin is bound by residues Arg-196 and Arg-213. 3 residues coordinate FAD: Asp-277, Leu-290, and Asn-291.

This sequence belongs to the rifampicin monooxygenase family. FAD serves as cofactor.

It carries out the reaction rifampicin + NADPH + O2 = rifampicin para-naphthoquinone carboxamide + NADP(+) + H2O + H(+). The catalysed reaction is rifampicin + NADH + O2 = rifampicin para-naphthoquinone carboxamide + NAD(+) + H2O + H(+). It catalyses the reaction rifamycin SV + NADPH + O2 = rifamycin SV para-naphthoquinone carboxamide + NADP(+) + H2O. The enzyme catalyses rifamycin SV + NADH + O2 = rifamycin SV para-naphthoquinone carboxamide + NAD(+) + H2O. In terms of biological role, monooxygenase that can modify rifampicin, thereby inactivating its antibiotic activity. Inactivates a broad range of rifamycin antibiotics. This is Rifampicin monooxygenase from Streptomyces venezuelae (strain ATCC 10712 / CBS 650.69 / DSM 40230 / JCM 4526 / NBRC 13096 / PD 04745).